The following is a 349-amino-acid chain: 4-hydroxythreonine-4-phosphate dehydrogenase (349 aa).

Thr-136 lines the substrate pocket. The a divalent metal cation site is built by His-171, His-216, and His-281. Positions 289, 298, and 307 each coordinate substrate.

This sequence belongs to the PdxA family. In terms of assembly, homodimer. Requires a divalent metal cation as cofactor.

It localises to the cytoplasm. The enzyme catalyses 4-(phosphooxy)-L-threonine + NAD(+) = 3-amino-2-oxopropyl phosphate + CO2 + NADH. The protein operates within cofactor biosynthesis; pyridoxine 5'-phosphate biosynthesis; pyridoxine 5'-phosphate from D-erythrose 4-phosphate: step 4/5. Catalyzes the NAD(P)-dependent oxidation of 4-(phosphooxy)-L-threonine (HTP) into 2-amino-3-oxo-4-(phosphooxy)butyric acid which spontaneously decarboxylates to form 3-amino-2-oxopropyl phosphate (AHAP). This Synechocystis sp. (strain ATCC 27184 / PCC 6803 / Kazusa) protein is 4-hydroxythreonine-4-phosphate dehydrogenase.